A 105-amino-acid polypeptide reads, in one-letter code: Nitrogenase-stabilizing/protective protein NifW (105 aa).

It belongs to the NifW family. Homotrimer; associates with NifD.

May protect the nitrogenase Fe-Mo protein from oxidative damage. The sequence is that of Nitrogenase-stabilizing/protective protein NifW from Nostoc punctiforme (strain ATCC 29133 / PCC 73102).